Here is a 370-residue protein sequence, read N- to C-terminus: GTPase Obg (370 aa).

Positions 1–159 constitute an Obg domain; sequence MKFIDEARIE…RMLRLELKVL (159 aa). The disordered stretch occupies residues 127–146; the sequence is NLHFKSSTNRAPRQKTDGKP. The OBG-type G domain maps to 160–334; the sequence is ADVGLLGMPN…LCYAIYDYLA (175 aa). GTP contacts are provided by residues 166 to 173, 191 to 195, 213 to 216, 284 to 287, and 315 to 317; these read GMPNAGKS, FTTLA, DIPG, NKLD, and SAL. Residues Ser-173 and Thr-193 each contribute to the Mg(2+) site.

The protein belongs to the TRAFAC class OBG-HflX-like GTPase superfamily. OBG GTPase family. Monomer. The cofactor is Mg(2+).

It localises to the cytoplasm. An essential GTPase which binds GTP, GDP and possibly (p)ppGpp with moderate affinity, with high nucleotide exchange rates and a fairly low GTP hydrolysis rate. Plays a role in control of the cell cycle, stress response, ribosome biogenesis and in those bacteria that undergo differentiation, in morphogenesis control. The sequence is that of GTPase Obg from Burkholderia lata (strain ATCC 17760 / DSM 23089 / LMG 22485 / NCIMB 9086 / R18194 / 383).